Reading from the N-terminus, the 83-residue chain is Small ribosomal subunit protein bS18 (83 aa).

It belongs to the bacterial ribosomal protein bS18 family. In terms of assembly, part of the 30S ribosomal subunit. Forms a tight heterodimer with protein bS6.

In terms of biological role, binds as a heterodimer with protein bS6 to the central domain of the 16S rRNA, where it helps stabilize the platform of the 30S subunit. This is Small ribosomal subunit protein bS18 from Desulfosudis oleivorans (strain DSM 6200 / JCM 39069 / Hxd3) (Desulfococcus oleovorans).